The following is a 627-amino-acid chain: Alpha-terpineol synthase, chloroplastic (627 aa).

The transit peptide at 1–53 (MAGITGVMNMKLAARPSSGRHSRGCRPAVVPSAGKQMLLVRRHPPGSASWPTR) directs the protein to the chloroplast. The segment at 13 to 90 (AARPSSGRHS…EDRASRNTSS (78 aa)) is disordered. (2E)-geranyl diphosphate contacts are provided by Arg339, Asp376, Asp380, Arg518, and Asp521. Residues Asp376 and Asp380 each contribute to the Mg(2+) site. Residues 376 to 380 (DDTYD) carry the DDXXD motif motif. Mg(2+)-binding residues include Asp521, Ser525, and Glu529.

This sequence belongs to the terpene synthase family. Tpsb subfamily. Monomer. The cofactor is Mg(2+). It depends on Mn(2+) as a cofactor. As to expression, expressed in seedling leaf sheaths and roots.

It is found in the plastid. It localises to the chloroplast. It catalyses the reaction (2E)-geranyl diphosphate + H2O = (S)-alpha-terpineol + diphosphate. The catalysed reaction is (2E)-geranyl diphosphate = (4S)-limonene + diphosphate. It carries out the reaction (2E)-geranyl diphosphate = gamma-terpinene + diphosphate. The enzyme catalyses (2E)-geranyl diphosphate = beta-myrcene + diphosphate. It catalyses the reaction (2E)-geranyl diphosphate = terpinolene + diphosphate. The catalysed reaction is (2E)-geranyl diphosphate + H2O = 4-terpineol + diphosphate. Its pathway is secondary metabolite biosynthesis; terpenoid biosynthesis. Its function is as follows. Component of the volatile terpenes biosynthesis pathways. Mediates the synthesis of a blend of monoterpenes. Converts mainly geranyl diphosphate to alpha-terpineol. Also triggers the biosynthesis of minor monoterpenes including limonene, gamma-terpinene, beta-myrcene, terpinolene and 4-terpineol. This chain is Alpha-terpineol synthase, chloroplastic, found in Zea mays (Maize).